The chain runs to 184 residues: MASPAASSVRPPRPKKEPQTLVIPKNAAEEQKLKLERLMKNPDKAVPIPEKMSEWAPRPPPEFVRDVMGSSAGAGSGEFHVYRHLRRREYQRQDYMDAMAEKQKLDAEFQKRLEKNKIAAEEQTAKRRKKRQKLKEKKLLAKKMKLEQKKQEGPGQPKEQGSSSSAEASGTEEEEEVPSFTMGR.

The segment covering 1–10 has biased composition (low complexity); that stretch reads MASPAASSVR. 3 disordered regions span residues 1–20, 37–76, and 120–184; these read MASP…EPQT, RLMK…GAGS, and AEEQ…TMGR. The segment at 1-50 is interaction with EIF2AK2; that stretch reads MASPAASSVRPPRPKKEPQTLVIPKNAAEEQKLKLERLMKNPDKAVPIPE. The required for RNA-binding stretch occupies residues 51 to 143; the sequence is KMSEWAPRPP…LKEKKLLAKK (93 aa). A coiled-coil region spans residues 91–152; that stretch reads QRQDYMDAMA…KMKLEQKKQE (62 aa). The required for nuclear localization stretch occupies residues 126–138; sequence KRRKKRQKLKEKK. Residues 126–143 show a composition bias toward basic residues; the sequence is KRRKKRQKLKEKKLLAKK. A compositionally biased stretch (low complexity) spans 159–169; sequence EQGSSSSAEAS.

The protein belongs to the PRKRIP1 family. Component of the pre-catalytic and post-catalytic spliceosome complexes. Interacts with EIF2AK2.

It localises to the nucleus. The protein localises to the nucleolus. Functionally, required for pre-mRNA splicing as component of the spliceosome. Binds double-stranded RNA. Inhibits EIF2AK2 kinase activity. In Pongo abelii (Sumatran orangutan), this protein is PRKR-interacting protein 1 (PRKRIP1).